Here is a 544-residue protein sequence, read N- to C-terminus: CTP synthase (544 aa).

The tract at residues 1–265 is amidoligase domain; sequence MARFIFITGG…DEAVLSAFGI (265 aa). S13 is a CTP binding site. Residue S13 coordinates UTP. 14 to 19 is an ATP binding site; the sequence is SLGKGL. Residue Y54 participates in L-glutamine binding. Residue D71 coordinates ATP. Residues D71 and E139 each coordinate Mg(2+). CTP contacts are provided by residues 146–148, 186–191, and K222; these read DIE and KTKPTQ. UTP-binding positions include 186 to 191 and K222; that span reads KTKPTQ. A Glutamine amidotransferase type-1 domain is found at 291–543; the sequence is TIGVVGKYVG…IAAALQQSRL (253 aa). G355 contacts L-glutamine. Residue C382 is the Nucleophile; for glutamine hydrolysis of the active site. L-glutamine is bound by residues 383 to 386, E406, and R471; that span reads LGMQ. Catalysis depends on residues H516 and E518.

Belongs to the CTP synthase family. As to quaternary structure, homotetramer.

It catalyses the reaction UTP + L-glutamine + ATP + H2O = CTP + L-glutamate + ADP + phosphate + 2 H(+). The catalysed reaction is L-glutamine + H2O = L-glutamate + NH4(+). It carries out the reaction UTP + NH4(+) + ATP = CTP + ADP + phosphate + 2 H(+). The protein operates within pyrimidine metabolism; CTP biosynthesis via de novo pathway; CTP from UDP: step 2/2. Its activity is regulated as follows. Allosterically activated by GTP, when glutamine is the substrate; GTP has no effect on the reaction when ammonia is the substrate. The allosteric effector GTP functions by stabilizing the protein conformation that binds the tetrahedral intermediate(s) formed during glutamine hydrolysis. Inhibited by the product CTP, via allosteric rather than competitive inhibition. In terms of biological role, catalyzes the ATP-dependent amination of UTP to CTP with either L-glutamine or ammonia as the source of nitrogen. Regulates intracellular CTP levels through interactions with the four ribonucleotide triphosphates. The polypeptide is CTP synthase (Rhizorhabdus wittichii (strain DSM 6014 / CCUG 31198 / JCM 15750 / NBRC 105917 / EY 4224 / RW1) (Sphingomonas wittichii)).